A 213-amino-acid chain; its full sequence is BREX protein BrxA (213 aa).

This sequence belongs to the BrxA family.

In terms of biological role, BREX systems (bacteriophage exclusion) provide immunity against bacteriophage. A probably non-essential part of a type 1 BREX system which protects against dsDNA phage. This system allows phage adsorption but prevents phage DNA replication, without degradation of the phage DNA. Methylation of bacterial DNA by PglX guides self/non-self discrimination. When the brxA-brxB-brxC-pglX-pglZ-brxL genes are transformed into a susceptible E.coli strain (BW25113) they confer very high resistance to infection by bacteriophage VR7 and VpaE1, about 100-fold protection against lambda, T5 and T7 and no protection against RNA phage Qbeta, ssDNA phage M13 or dSDNA phage T4 and VR5. Glycosylated phage DNA is not susceptible to BREX. The BREX system does not confer resistance to lysogenic lambda phage, i.e. prophage that are integrated into the chromosomal DNA and then induced to form phage. In Escherichia coli O9:H4 (strain HS), this protein is BREX protein BrxA.